A 182-amino-acid polypeptide reads, in one-letter code: Vacuolar protein sorting-associated protein 29 (182 aa).

K50 carries the post-translational modification N6-acetyllysine.

Belongs to the VPS29 family. As to quaternary structure, component of the commander complex consisting of the CCC subcomplex and the retriever subcomplex. Component of the heterotrimeric retriever complex formed by VPS26C, VPS29 and VPS35L; within the complex interacts with VPS35L. Component of the heterotrimeric retromer cargo-selective complex (CSC), also described as vacuolar protein sorting subcomplex (VPS), formed by VPS26 (VPS26A or VPS26B), VPS29 and VPS35. The CSC has a highly elongated structure with VPS26 and VPS29 binding independently at opposite distal ends of VPS35 as central platform. The CSC is believed to associate with variable sorting nexins to form functionally distinct retromer complex variants. The originally described retromer complex (also called SNX-BAR retromer) is a pentamer containing the CSC and a heterodimeric membrane-deforming subcomplex formed between SNX1 or SNX2 and SNX5 or SNX6 (also called SNX-BAR subcomplex); the respective CSC and SNX-BAR subcomplexes associate with low affinity. The CSC associates with SNX3 to form a SNX3-retromer complex. The CSC associates with SNX27, the WASH complex and the SNX-BAR subcomplex to form the SNX27-retromer complex. Interacts with VPS26A, VPS35, SNX1, SNX2, SNX3, SNX27, WASHC5. Interacts with TBC1D5; this interaction is blocked by VPS35L in the retriever complex. Interacts with SNX17; the interaction is indirect; SNX17 (via its C-terminus) interacts with the retriever complex (via VPS26C and VPS35L). Interacts with VPS26B and ANKRD27.

It is found in the cytoplasm. The protein resides in the membrane. It localises to the endosome membrane. Its subcellular location is the early endosome. The protein localises to the late endosome. Functionally, component of the commander complex that is essential for endosomal recycling of transmembrane cargos; the commander complex is composed of the CCC subcomplex and the retriever subcomplex. Component of the retriever complex, which is a heterotrimeric complex related to retromer cargo-selective complex (CSC) and essential for retromer-independent retrieval and recycling of numerous cargos such as integrin alpha-5/beta-1 (ITGA5:ITGB1). Component of the retromer cargo-selective complex (CSC). The CSC is believed to be the core functional component of retromer or respective retromer complex variants acting to prevent missorting of selected transmembrane cargo proteins into the lysosomal degradation pathway. The recruitment of the CSC to the endosomal membrane involves RAB7A and SNX3. The SNX-BAR retromer mediates retrograde transport of cargo proteins from endosomes to the trans-Golgi network (TGN) and is involved in endosome-to-plasma membrane transport for cargo protein recycling. The SNX3-retromer mediates the retrograde endosome-to-TGN transport of WLS distinct from the SNX-BAR retromer pathway. The SNX27-retromer is believed to be involved in endosome-to-plasma membrane trafficking and recycling of a broad spectrum of cargo proteins. The CSC seems to act as recruitment hub for other proteins, such as the WASH complex and TBC1D5. Required to regulate transcytosis of the polymeric immunoglobulin receptor (pIgR-pIgA). In the endosomes, retriever complex drives the retrieval and recycling of NxxY-motif-containing cargo proteins by coupling to SNX17, a cargo essential for the homeostatic maintenance of numerous cell surface proteins associated with processes that include cell migration, cell adhesion, nutrient supply and cell signaling. The recruitment of the retriever complex to the endosomal membrane involves CCC and WASH complexes. Involved in GLUT1 endosome-to-plasma membrane trafficking; the function is dependent of association with ANKRD27. In Rattus norvegicus (Rat), this protein is Vacuolar protein sorting-associated protein 29.